The chain runs to 102 residues: NADH-quinone oxidoreductase subunit K (102 aa).

3 helical membrane-spanning segments follow: residues 6 to 26 (MEHG…GLLI), 30 to 50 (LLFI…AFVV), and 65 to 85 (ILVI…LLLL).

It belongs to the complex I subunit 4L family. As to quaternary structure, NDH-1 is composed of 14 different subunits. Subunits NuoA, H, J, K, L, M, N constitute the membrane sector of the complex.

It localises to the cell inner membrane. It carries out the reaction a quinone + NADH + 5 H(+)(in) = a quinol + NAD(+) + 4 H(+)(out). Functionally, NDH-1 shuttles electrons from NADH, via FMN and iron-sulfur (Fe-S) centers, to quinones in the respiratory chain. The immediate electron acceptor for the enzyme in this species is believed to be ubiquinone. Couples the redox reaction to proton translocation (for every two electrons transferred, four hydrogen ions are translocated across the cytoplasmic membrane), and thus conserves the redox energy in a proton gradient. The polypeptide is NADH-quinone oxidoreductase subunit K (Aeromonas salmonicida (strain A449)).